A 452-amino-acid chain; its full sequence is MALQTLQSSWVTFRKILSHFPEELSLAFVYGSGVYRQAGPSSDQKNAMLDFVFTVDDPVAWHSKNLKKNWSHYSFLKVLGPKIITSIQNNYGAGVYYNSLIMCNGRLIKYGVISTNVLIEDLLNWNNLYIAGRLQKPVKIISVNEDVTLRSALDRNLKSAVTAAFLMLPESFSEEDLFIEIAGLSYSGDFRMVVGEDKTKVLNIVKPNIAHFRELYGSILQENPQVVYKSQQGWLEIDKSPEGQFTQLMTLPKTLQQQINHIMDPPGKNRDVEETLFQVAHDPDCGDVVRLGLSAIVRPSSIRQSTKGIFTAGKSFGNPCVTYLLTEWLPHSWLQCKALYLLGACEMLSFDGHKLGYCSKVQTGITAAEPGGRTMSDHWQCCWKLYCPSEFSETLPVCRVFPSYCFIYQSYRCIGLQKQQHLCSPSSSPSLRQLLPSVLVGYFCCYCHFSKW.

This sequence belongs to the TAM41 family. It depends on Mg(2+) as a cofactor.

Its subcellular location is the mitochondrion inner membrane. The enzyme catalyses a 1,2-diacyl-sn-glycero-3-phosphate + CTP + H(+) = a CDP-1,2-diacyl-sn-glycerol + diphosphate. It participates in phospholipid metabolism; CDP-diacylglycerol biosynthesis; CDP-diacylglycerol from sn-glycerol 3-phosphate: step 3/3. Its function is as follows. Catalyzes the conversion of phosphatidic acid (PA) to CDP-diacylglycerol (CDP-DAG), an essential intermediate in the synthesis of phosphatidylglycerol, cardiolipin and phosphatidylinositol. This Homo sapiens (Human) protein is Phosphatidate cytidylyltransferase, mitochondrial (TAMM41).